A 122-amino-acid chain; its full sequence is Large ribosomal subunit protein uL14 (122 aa).

It belongs to the universal ribosomal protein uL14 family. In terms of assembly, part of the 50S ribosomal subunit. Forms a cluster with proteins L3 and L19. In the 70S ribosome, L14 and L19 interact and together make contacts with the 16S rRNA in bridges B5 and B8.

Functionally, binds to 23S rRNA. Forms part of two intersubunit bridges in the 70S ribosome. This Chlamydia trachomatis serovar L2 (strain ATCC VR-902B / DSM 19102 / 434/Bu) protein is Large ribosomal subunit protein uL14.